The sequence spans 164 residues: UPF0114 protein YqhA (164 aa).

Helical transmembrane passes span 10-32 (YASRWLLAPVYFGLSLALVALAL), 53-75 (LILVLLSLVDMTLVGGLLVMVMF), and 136-155 (LMWYVIIHLTFVLSAFVMGY).

This sequence belongs to the UPF0114 family.

Its subcellular location is the cell membrane. The protein is UPF0114 protein YqhA of Shigella flexneri.